The sequence spans 99 residues: Large ribosomal subunit protein uL23 (99 aa).

As to quaternary structure, contacts protein L29, and trigger factor when it is bound to the ribosome. Part of the 50S ribosomal subunit.

Functionally, one of the early assembly proteins it binds 23S rRNA. One of the proteins that surrounds the polypeptide exit tunnel on the outside of the ribosome. Forms the main docking site for trigger factor binding to the ribosome. The polypeptide is Large ribosomal subunit protein uL23 (Rhodopseudomonas palustris (strain ATCC BAA-98 / CGA009)).